The chain runs to 187 residues: Plasmodium-specific hydrophobic abundant protein (187 aa).

The first 18 residues, 1-18 (MMKYVFVALCLFAVVALA), serve as a signal peptide directing secretion.

To HAP-S protein.

The protein localises to the membrane. The sequence is that of Plasmodium-specific hydrophobic abundant protein from Physarum polycephalum (Slime mold).